The chain runs to 110 residues: V-type proton ATPase subunit F (110 aa).

It belongs to the V-ATPase F subunit family. V-ATPase is a heteromultimeric enzyme made up of two complexes: the ATP-hydrolytic V1 complex and the proton translocation V0 complex. The V1 complex consists of three catalytic AB heterodimers that form a heterohexamer, three peripheral stalks each consisting of EG heterodimers, one central rotor including subunits D and F, and the regulatory subunits C and H. The proton translocation complex V0 consists of the proton transport subunit a, a ring of proteolipid subunits c9c'', rotary subunit d, subunits e and f, and two accessory subunits.

Subunit of the V1 complex of vacuolar(H+)-ATPase (V-ATPase), a multisubunit enzyme composed of a peripheral complex (V1) that hydrolyzes ATP and a membrane integral complex (V0) that translocates protons. V-ATPase is responsible for acidifying and maintaining the pH of intracellular compartments and in some cell types, is targeted to the plasma membrane, where it is responsible for acidifying the extracellular environment. This is V-type proton ATPase subunit F (atp6s14) from Xenopus laevis (African clawed frog).